The sequence spans 919 residues: Isoleucine--tRNA ligase (919 aa).

The 'HIGH' region motif lies at 57–67 (PYANGNIHIGH). E569 is a binding site for L-isoleucyl-5'-AMP. The 'KMSKS' region motif lies at 610–614 (KMSKS). ATP is bound at residue K613. 4 residues coordinate Zn(2+): C896, C899, C911, and C914.

This sequence belongs to the class-I aminoacyl-tRNA synthetase family. IleS type 1 subfamily. As to quaternary structure, monomer. The cofactor is Zn(2+).

It localises to the cytoplasm. It catalyses the reaction tRNA(Ile) + L-isoleucine + ATP = L-isoleucyl-tRNA(Ile) + AMP + diphosphate. Functionally, catalyzes the attachment of isoleucine to tRNA(Ile). As IleRS can inadvertently accommodate and process structurally similar amino acids such as valine, to avoid such errors it has two additional distinct tRNA(Ile)-dependent editing activities. One activity is designated as 'pretransfer' editing and involves the hydrolysis of activated Val-AMP. The other activity is designated 'posttransfer' editing and involves deacylation of mischarged Val-tRNA(Ile). This is Isoleucine--tRNA ligase from Aliarcobacter butzleri (strain RM4018) (Arcobacter butzleri).